The chain runs to 477 residues: Proline--tRNA ligase (477 aa).

The L-proline site is built by threonine 111, glutamate 113, and arginine 142. ATP is bound by residues arginine 142, threonine 153, glutamine 225, and threonine 228. Residue histidine 230 coordinates L-proline. Serine 262 and arginine 264 together coordinate ATP. Residues 340–369 are interaction with tRNA; sequence ELKGVPFRVELGPKDLEGGQAVLASRLGGK. Residues cysteine 427, cysteine 432, cysteine 458, and cysteine 461 each coordinate Zn(2+).

This sequence belongs to the class-II aminoacyl-tRNA synthetase family. ProS type 3 subfamily. Homodimer. Only one tRNA molecule binds per dimer.

The protein resides in the cytoplasm. The catalysed reaction is tRNA(Pro) + L-proline + ATP = L-prolyl-tRNA(Pro) + AMP + diphosphate. Its function is as follows. Catalyzes the attachment of proline to tRNA(Pro) in a two-step reaction: proline is first activated by ATP to form Pro-AMP and then transferred to the acceptor end of tRNA(Pro). Can inadvertently accommodate and process cysteine. The sequence is that of Proline--tRNA ligase (proS) from Thermus thermophilus (strain ATCC 27634 / DSM 579 / HB8).